We begin with the raw amino-acid sequence, 113 residues long: Hydrogenase maturation factor HypA (113 aa).

Residue His2 coordinates Ni(2+). Zn(2+)-binding residues include Cys70, Cys73, Cys86, and Cys88.

It belongs to the HypA/HybF family.

Involved in the maturation of [NiFe] hydrogenases. Required for nickel insertion into the metal center of the hydrogenase. The chain is Hydrogenase maturation factor HypA from Nostoc punctiforme (strain ATCC 29133 / PCC 73102).